Here is a 320-residue protein sequence, read N- to C-terminus: Lipoyl synthase (320 aa).

The interval 1–28 (MVTVVDRVTDRRLRHPEKAHRPDTSVQK) is disordered. The span at 19–28 (AHRPDTSVQK) shows a compositional bias: basic and acidic residues. [4Fe-4S] cluster-binding residues include Cys59, Cys64, Cys70, Cys85, Cys89, Cys92, and Ser298. A Radical SAM core domain is found at 71 to 287 (WSQRHASFMI…AKIGKVKGFL (217 aa)).

The protein belongs to the radical SAM superfamily. Lipoyl synthase family. [4Fe-4S] cluster is required as a cofactor.

It is found in the cytoplasm. It catalyses the reaction [[Fe-S] cluster scaffold protein carrying a second [4Fe-4S](2+) cluster] + N(6)-octanoyl-L-lysyl-[protein] + 2 oxidized [2Fe-2S]-[ferredoxin] + 2 S-adenosyl-L-methionine + 4 H(+) = [[Fe-S] cluster scaffold protein] + N(6)-[(R)-dihydrolipoyl]-L-lysyl-[protein] + 4 Fe(3+) + 2 hydrogen sulfide + 2 5'-deoxyadenosine + 2 L-methionine + 2 reduced [2Fe-2S]-[ferredoxin]. It participates in protein modification; protein lipoylation via endogenous pathway; protein N(6)-(lipoyl)lysine from octanoyl-[acyl-carrier-protein]: step 2/2. In terms of biological role, catalyzes the radical-mediated insertion of two sulfur atoms into the C-6 and C-8 positions of the octanoyl moiety bound to the lipoyl domains of lipoate-dependent enzymes, thereby converting the octanoylated domains into lipoylated derivatives. In Bartonella henselae (strain ATCC 49882 / DSM 28221 / CCUG 30454 / Houston 1) (Rochalimaea henselae), this protein is Lipoyl synthase.